The following is a 215-amino-acid chain: UPF0319 protein VVA1446 (215 aa).

The first 21 residues, Met-1–Ala-21, serve as a signal peptide directing secretion.

This sequence belongs to the UPF0319 family.

The polypeptide is UPF0319 protein VVA1446 (Vibrio vulnificus (strain YJ016)).